The primary structure comprises 200 residues: Acyl-homoserine-lactone synthase (200 aa).

This sequence belongs to the autoinducer synthase family.

The catalysed reaction is a fatty acyl-[ACP] + S-adenosyl-L-methionine = an N-acyl-L-homoserine lactone + S-methyl-5'-thioadenosine + holo-[ACP] + H(+). Its function is as follows. Required for the synthesis of BHL (N-butanoyl-L-homoserine lactone). In Serratia liquefaciens, this protein is Acyl-homoserine-lactone synthase (swrI).